The chain runs to 456 residues: Bifunctional protein GlmU (456 aa).

A pyrophosphorylase region spans residues 1–228 (MPQNTLNIVI…SHLAAGVNNK (228 aa)). UDP-N-acetyl-alpha-D-glucosamine-binding positions include 11–14 (LAAG), Lys-25, Gln-75, 80–81 (GT), 102–104 (YGD), Gly-138, Glu-153, Asn-168, and Asn-226. Mg(2+) is bound at residue Asp-104. Residue Asn-226 coordinates Mg(2+). A linker region spans residues 229-249 (LQLTELERIFQTEQAQELLKA). The interval 250 to 456 (GVTLRDPARF…GWVRPEKDKQ (207 aa)) is N-acetyltransferase. 2 residues coordinate UDP-N-acetyl-alpha-D-glucosamine: Arg-332 and Lys-350. Residue His-362 is the Proton acceptor of the active site. UDP-N-acetyl-alpha-D-glucosamine is bound by residues Tyr-365 and Asn-376. Residues Ala-379, 385 to 386 (NY), Ser-404, Ala-422, and Arg-439 contribute to the acetyl-CoA site.

The protein in the N-terminal section; belongs to the N-acetylglucosamine-1-phosphate uridyltransferase family. In the C-terminal section; belongs to the transferase hexapeptide repeat family. In terms of assembly, homotrimer. The cofactor is Mg(2+).

The protein resides in the cytoplasm. It catalyses the reaction alpha-D-glucosamine 1-phosphate + acetyl-CoA = N-acetyl-alpha-D-glucosamine 1-phosphate + CoA + H(+). The enzyme catalyses N-acetyl-alpha-D-glucosamine 1-phosphate + UTP + H(+) = UDP-N-acetyl-alpha-D-glucosamine + diphosphate. The protein operates within nucleotide-sugar biosynthesis; UDP-N-acetyl-alpha-D-glucosamine biosynthesis; N-acetyl-alpha-D-glucosamine 1-phosphate from alpha-D-glucosamine 6-phosphate (route II): step 2/2. Its pathway is nucleotide-sugar biosynthesis; UDP-N-acetyl-alpha-D-glucosamine biosynthesis; UDP-N-acetyl-alpha-D-glucosamine from N-acetyl-alpha-D-glucosamine 1-phosphate: step 1/1. It functions in the pathway bacterial outer membrane biogenesis; LPS lipid A biosynthesis. Its function is as follows. Catalyzes the last two sequential reactions in the de novo biosynthetic pathway for UDP-N-acetylglucosamine (UDP-GlcNAc). The C-terminal domain catalyzes the transfer of acetyl group from acetyl coenzyme A to glucosamine-1-phosphate (GlcN-1-P) to produce N-acetylglucosamine-1-phosphate (GlcNAc-1-P), which is converted into UDP-GlcNAc by the transfer of uridine 5-monophosphate (from uridine 5-triphosphate), a reaction catalyzed by the N-terminal domain. This Neisseria meningitidis serogroup B (strain ATCC BAA-335 / MC58) protein is Bifunctional protein GlmU.